The chain runs to 236 residues: RNA-binding protein 24 (236 aa).

The RRM domain occupies 11–88 (TKIFVGGLPY…RKANVNLAYL (78 aa)). Residues 175 to 199 (QYPYAASPAAAGYVTTGGYSYAVQQ) are necessary for interaction with EIF4E.

As to quaternary structure, interacts with EIF4E; this interaction prevents EIF4E from binding to p53/TP53 mRNA and inhibits the assembly of translation initiation complex. In terms of tissue distribution, expressed strongly in heart and skeletal muscles. Weakly expressed in intestine, aorta, liver, lung, kidney, uterus and bladder.

It localises to the nucleus. The protein resides in the cytoplasm. In terms of biological role, multifunctional RNA-binding protein involved in the regulation of pre-mRNA splicing, mRNA stability and mRNA translation important for cell fate decision and differentiation. Plays a major role in pre-mRNA alternative splicing regulation. Mediates preferentially muscle-specific exon inclusion in numerous mRNAs important for striated cardiac and skeletal muscle cell differentiation. Binds to intronic splicing enhancer (ISE) composed of stretches of GU-rich motifs localized in flanking intron of exon that will be included by alternative splicing. Involved in embryonic stem cell (ESC) transition to cardiac cell differentiation by promoting pre-mRNA alternative splicing events of several pluripotency and/or differentiation genes. Plays a role in the regulation of mRNA stability. Binds to 3'-untranslated region (UTR) AU-rich elements in target transcripts, such as CDKN1A and MYOG, leading to maintain their stabilities. Involved in myogenic differentiation by regulating MYOG levels. Binds to multiple regions in the mRNA 3'-UTR of TP63, hence inducing its destabilization. Also promotes the destabilization of the CHRM2 mRNA via its binding to a region in the coding sequence. Plays a role in the regulation of mRNA translation. Mediates repression of p53/TP53 mRNA translation through its binding to U-rich element in the 3'-UTR, hence preventing EIF4E from binding to p53/TP53 mRNA and translation initiation. Binds to a huge amount of mRNAs. Required for embryonic heart development, sarcomer and M-band formation in striated muscles. Together with RBM20, promotes the expression of short isoforms of PDLIM5/ENH in cardiomyocytes. This Mus musculus (Mouse) protein is RNA-binding protein 24.